A 416-amino-acid chain; its full sequence is Phosphoribosylamine--glycine ligase (416 aa).

Residues Lys-107 to Thr-303 form the ATP-grasp domain. Leu-133–Ser-184 is an ATP binding site. The Mg(2+) site is built by Glu-273 and Asn-275.

This sequence belongs to the GARS family. Mg(2+) serves as cofactor. It depends on Mn(2+) as a cofactor.

The catalysed reaction is 5-phospho-beta-D-ribosylamine + glycine + ATP = N(1)-(5-phospho-beta-D-ribosyl)glycinamide + ADP + phosphate + H(+). The protein operates within purine metabolism; IMP biosynthesis via de novo pathway; N(1)-(5-phospho-D-ribosyl)glycinamide from 5-phospho-alpha-D-ribose 1-diphosphate: step 2/2. The protein is Phosphoribosylamine--glycine ligase of Streptomyces coelicolor (strain ATCC BAA-471 / A3(2) / M145).